Reading from the N-terminus, the 259-residue chain is UPF0739 protein C1orf74 homolog (259 aa).

This sequence belongs to the UPF0739 family.

In Danio rerio (Zebrafish), this protein is UPF0739 protein C1orf74 homolog.